A 303-amino-acid polypeptide reads, in one-letter code: BAG family molecular chaperone regulator 3 (303 aa).

Over residues 1-11 the composition is skewed to polar residues; it reads MMKMNTGTSPS. Residues 1 to 27 are disordered; it reads MMKMNTGTSPSVIGGGTSGNEWESRPG. The Ubiquitin-like domain maps to 45-119; it reads FRVRVKYGSV…LVVKEDPISQ (75 aa). Positions 138 to 216 constitute a BAG domain; that stretch reads SISDISFEVD…KYVEALDLLK (79 aa). A disordered region spans residues 249-268; the sequence is VEEEEEEPRNSNASSSSGTP. Positions 258-267 are enriched in polar residues; it reads NSNASSSSGT. S263 is subject to Phosphoserine.

As to quaternary structure, binds to the ATPase domain of HSP70/HSC70 chaperones. Interacts with HSP70-1.

Co-chaperone that regulates diverse cellular pathways, such as programmed cell death and stress responses. This is BAG family molecular chaperone regulator 3 (BAG3) from Arabidopsis thaliana (Mouse-ear cress).